The chain runs to 282 residues: ATP phosphoribosyltransferase (282 aa).

The protein belongs to the ATP phosphoribosyltransferase family. Long subfamily. The cofactor is Mg(2+).

Its subcellular location is the cytoplasm. The catalysed reaction is 1-(5-phospho-beta-D-ribosyl)-ATP + diphosphate = 5-phospho-alpha-D-ribose 1-diphosphate + ATP. Its pathway is amino-acid biosynthesis; L-histidine biosynthesis; L-histidine from 5-phospho-alpha-D-ribose 1-diphosphate: step 1/9. Its activity is regulated as follows. Feedback inhibited by histidine. Functionally, catalyzes the condensation of ATP and 5-phosphoribose 1-diphosphate to form N'-(5'-phosphoribosyl)-ATP (PR-ATP). Has a crucial role in the pathway because the rate of histidine biosynthesis seems to be controlled primarily by regulation of HisG enzymatic activity. In Pyrobaculum neutrophilum (strain DSM 2338 / JCM 9278 / NBRC 100436 / V24Sta) (Thermoproteus neutrophilus), this protein is ATP phosphoribosyltransferase.